The primary structure comprises 72 residues: Cell division protein ZapB (72 aa).

Residues 1–71 adopt a coiled-coil conformation; sequence MSLEILDQLE…LRSLLGRIDN (71 aa). The segment at 36-56 is disordered; sequence LSRQTNEQLRSENEHLKTEHH. Residues 44 to 56 show a composition bias toward basic and acidic residues; sequence LRSENEHLKTEHH.

Belongs to the ZapB family. In terms of assembly, homodimer. The ends of the coiled-coil dimer bind to each other, forming polymers. Interacts with FtsZ.

Its subcellular location is the cytoplasm. Functionally, non-essential, abundant cell division factor that is required for proper Z-ring formation. It is recruited early to the divisome by direct interaction with FtsZ, stimulating Z-ring assembly and thereby promoting cell division earlier in the cell cycle. Its recruitment to the Z-ring requires functional FtsA or ZipA. This is Cell division protein ZapB from Histophilus somni (strain 129Pt) (Haemophilus somnus).